The chain runs to 250 residues: MSNDPTHQFLIQKIVPIEVGGIDFSFTNASLFMAASAAVAVGFLYFATSNRAIVPGRSQSVAEMSYEFIANMLKEGAGKQGMKFFPLVFSLFMFVLTANLLGMFPYFFTVTSQIIVTFALAILVIGTVLVYGFYKHGFHFLNVFVPSGVPGILLPLVVAIEIISFLSRPISLSVRLFANMLAGHITLKVFAGFVASLGALGAVGVGGAVLPLIMTVALTGLEFLVAFLQAYVFAVLTCMYLNDAIHPGGH.

Transmembrane regions (helical) follow at residues 29 to 49 (ASLF…FATS), 84 to 104 (FFPL…LGMF), 114 to 134 (IIVT…YGFY), 143 to 163 (VFVP…IEII), 193 to 213 (FVAS…LPLI), and 216 to 236 (VALT…FAVL).

The protein belongs to the ATPase A chain family. F-type ATPases have 2 components, CF(1) - the catalytic core - and CF(0) - the membrane proton channel. CF(1) has five subunits: alpha(3), beta(3), gamma(1), delta(1), epsilon(1). CF(0) has three main subunits: a(1), b(2) and c(9-12). The alpha and beta chains form an alternating ring which encloses part of the gamma chain. CF(1) is attached to CF(0) by a central stalk formed by the gamma and epsilon chains, while a peripheral stalk is formed by the delta and b chains.

The protein resides in the cell inner membrane. Key component of the proton channel; it plays a direct role in the translocation of protons across the membrane. This chain is ATP synthase subunit a, found in Rhizobium etli (strain CIAT 652).